Consider the following 243-residue polypeptide: UPF0246 protein MGAS9429_Spy1799 (243 aa).

Belongs to the UPF0246 family.

In Streptococcus pyogenes serotype M12 (strain MGAS9429), this protein is UPF0246 protein MGAS9429_Spy1799.